A 317-amino-acid polypeptide reads, in one-letter code: L-lactate dehydrogenase (317 aa).

NAD(+)-binding positions include Val-17, Asp-38, Lys-43, Tyr-69, and 83–84 (GA). The substrate site is built by Gln-86 and Arg-92. Residues Ser-105, 122 to 124 (ATN), and Ser-147 each bind NAD(+). 124–127 (NPVD) provides a ligand contact to substrate. Residue 152-155 (DTAR) participates in substrate binding. Residues Arg-157 and His-172 each contribute to the beta-D-fructose 1,6-bisphosphate site. His-179 functions as the Proton acceptor in the catalytic mechanism. Tyr-224 carries the phosphotyrosine modification. Thr-233 lines the substrate pocket.

The protein belongs to the LDH/MDH superfamily. LDH family. In terms of assembly, homotetramer.

The protein localises to the cytoplasm. The enzyme catalyses (S)-lactate + NAD(+) = pyruvate + NADH + H(+). It participates in fermentation; pyruvate fermentation to lactate; (S)-lactate from pyruvate: step 1/1. With respect to regulation, allosterically activated by fructose 1,6-bisphosphate (FBP). Functionally, catalyzes the conversion of lactate to pyruvate. This Bacillus caldotenax protein is L-lactate dehydrogenase.